Consider the following 278-residue polypeptide: Probable cytochrome c oxidase subunit 3 (278 aa).

The next 6 helical transmembrane spans lie at 21–41 (PWPI…ISSM), 46–66 (FNMY…YSWW), 89–109 (IGMV…FASF), 174–194 (CVTA…MQVY), 212–232 (FYLA…FLIV), and 256–276 (AWYW…VYIL).

It belongs to the cytochrome c oxidase subunit 3 family.

Its subcellular location is the cell membrane. The enzyme catalyses 4 Fe(II)-[cytochrome c] + O2 + 8 H(+)(in) = 4 Fe(III)-[cytochrome c] + 2 H2O + 4 H(+)(out). This chain is Probable cytochrome c oxidase subunit 3 (ctaE), found in Rickettsia prowazekii (strain Madrid E).